The following is a 193-amino-acid chain: Ion-translocating oxidoreductase complex subunit A (193 aa).

The next 6 membrane-spanning stretches (helical) occupy residues 5–25 (LLLL…FLGL), 39–59 (IGMG…SYLV), 67–87 (LGIE…VVQF), 102–122 (VLGI…VALL), 134–154 (IIYG…FSAM), and 171–191 (SIAM…TGLV).

The protein belongs to the NqrDE/RnfAE family. As to quaternary structure, the complex is composed of six subunits: RnfA, RnfB, RnfC, RnfD, RnfE and RnfG.

The protein resides in the cell inner membrane. Functionally, part of a membrane-bound complex that couples electron transfer with translocation of ions across the membrane. This chain is Ion-translocating oxidoreductase complex subunit A, found in Aliivibrio fischeri (strain ATCC 700601 / ES114) (Vibrio fischeri).